An 82-amino-acid chain; its full sequence is Small ribosomal subunit protein bS16 (82 aa).

It belongs to the bacterial ribosomal protein bS16 family.

This chain is Small ribosomal subunit protein bS16, found in Aliivibrio fischeri (strain ATCC 700601 / ES114) (Vibrio fischeri).